Consider the following 730-residue polypeptide: Zinc finger protein 615 (730 aa).

Positions 7-78 (LTLEDVAVDF…EDEIYSRICF (72 aa)) constitute a KRAB domain. 19 consecutive C2H2-type zinc fingers follow at residues 203-225 (HVCS…QRVH), 231-253 (HVCS…QRTH), 259-281 (YECT…QKTH), 287-309 (YTCS…QRTH), 315-337 (HGCS…QKTH), 343-365 (YICS…HRTH), 371-393 (FICN…QQTH), 399-421 (YTCS…QRTH), 427-449 (YKCN…QRTH), 455-477 (YVCT…QRTH), 483-505 (YICN…QRTH), 511-533 (YVCG…QRTH), 539-561 (YICD…RRTH), 567-589 (YVCS…QRTH), 595-617 (YICN…QQTH), 623-645 (YKCN…QRFH), 651-673 (FACT…QRIH), 679-701 (YKCS…QRKH), and 707-729 (YGCS…KRIH).

Belongs to the krueppel C2H2-type zinc-finger protein family.

The protein localises to the nucleus. May be involved in transcriptional regulation. This Pongo abelii (Sumatran orangutan) protein is Zinc finger protein 615 (ZNF615).